A 97-amino-acid chain; its full sequence is Large ribosomal subunit protein uL23 (97 aa).

Belongs to the universal ribosomal protein uL23 family. In terms of assembly, part of the 50S ribosomal subunit. Contacts protein L29, and trigger factor when it is bound to the ribosome.

One of the early assembly proteins it binds 23S rRNA. One of the proteins that surrounds the polypeptide exit tunnel on the outside of the ribosome. Forms the main docking site for trigger factor binding to the ribosome. The polypeptide is Large ribosomal subunit protein uL23 (Thermoanaerobacter pseudethanolicus (strain ATCC 33223 / 39E) (Clostridium thermohydrosulfuricum)).